The following is a 252-amino-acid chain: Chitooligosaccharide deacetylase (252 aa).

2 residues coordinate Mg(2+): H61 and H125.

It belongs to the YdjC deacetylase family. ChbG subfamily. In terms of assembly, homodimer. Requires Mg(2+) as cofactor.

It is found in the cytoplasm. The enzyme catalyses N,N'-diacetylchitobiose + H2O = N-acetyl-beta-D-glucosaminyl-(1-&gt;4)-D-glucosamine + acetate. The catalysed reaction is diacetylchitobiose-6'-phosphate + H2O = N'-monoacetylchitobiose-6'-phosphate + acetate. It functions in the pathway glycan degradation; chitin degradation. Its function is as follows. Involved in the degradation of chitin. ChbG is essential for growth on the acetylated chitooligosaccharides chitobiose and chitotriose but is dispensable for growth on cellobiose and chitosan dimer, the deacetylated form of chitobiose. Deacetylation of chitobiose-6-P and chitotriose-6-P is necessary for both the activation of the chb promoter by the regulatory protein ChbR and the hydrolysis of phosphorylated beta-glucosides by the phospho-beta-glucosidase ChbF. Catalyzes the removal of only one acetyl group from chitobiose-6-P to yield monoacetylchitobiose-6-P, the inducer of ChbR and the substrate of ChbF. The polypeptide is Chitooligosaccharide deacetylase (Klebsiella pneumoniae subsp. pneumoniae (strain ATCC 700721 / MGH 78578)).